Consider the following 354-residue polypeptide: C-C chemokine receptor type 5 (354 aa).

Over 1–32 the chain is Extracellular; that stretch reads MDFQGSVPTYSYDIDYGMSAPCQKINVKQIAA. An O-linked (GalNAc...) serine glycan is attached at S6. 3 positions are modified to sulfotyrosine: Y10, Y12, and Y16. Disulfide bonds link C22/C271 and C103/C180. A helical transmembrane segment spans residues 33–60; it reads QLLPPLYSLVFIFGFVGNMMVFLILISC. Residues 61-70 lie on the Cytoplasmic side of the membrane; it reads KKLKSVTDIY. A helical membrane pass occupies residues 71–91; the sequence is LLNLAISDLLFLLTLPFWAHY. The Extracellular portion of the chain corresponds to 92-104; sequence AANEWVFGNIMCK. A helical membrane pass occupies residues 105–126; it reads VFTGLYHIGYFGGIFFIILLTI. Over 127–143 the chain is Cytoplasmic; it reads DRYLAIVHAVFALKVRT. The helical transmembrane segment at 144–168 threads the bilayer; it reads VNFGVITSVVTWAVAVFASLPEIIF. At 169-200 the chain is on the extracellular side; it reads TRSQKEGFHYTCSPHFPHTQYHFWKSFQTLKM. Residues 201-220 form a helical membrane-spanning segment; that stretch reads VILSLILPLLVMVICYSGIL. Residues 221 to 237 lie on the Cytoplasmic side of the membrane; that stretch reads HTLFRCRNEKKRHRAVR. A helical membrane pass occupies residues 238–262; it reads LIFAIMIVYFLFWTPYNIVLLLTTF. Over 263-279 the chain is Extracellular; sequence QEFFGLNNCSSSNRLDQ. Residues 280–303 traverse the membrane as a helical segment; sequence AMQATETLGMTHCCLNPVIYAFVG. Topologically, residues 304 to 354 are cytoplasmic; that stretch reads EKFRSYLSVFFRKHMVKRFCKRCSIFQQDNPDRASSVYTRSTGEHEVSTGL. S-palmitoyl cysteine attachment occurs at residues C323 and C326. S338, S339, S344, and S351 each carry phosphoserine; by BARK1.

It belongs to the G-protein coupled receptor 1 family. As to quaternary structure, interacts with PRAF2. Efficient ligand binding to CCL3/MIP-1alpha and CCL4/MIP-1beta requires sulfation, O-glycosylation and sialic acid modifications. Glycosylation on Ser-6 is required for efficient binding of CCL4. Interacts with GRK2. Interacts with ARRB1 and ARRB2. Interacts with CNIH4. Interacts with S100A4; this interaction stimulates T-lymphocyte chemotaxis. Post-translationally, sulfated on at least 2 of the N-terminal tyrosines. Sulfation is required for efficient binding of the chemokines, CCL3 and CCL4. O-glycosylated, but not N-glycosylated. Ser-6 appears to be the major site. Also sialylated glycans present which contribute to chemokine binding. In terms of processing, palmitoylation in the C-terminal is important for cell surface expression. Post-translationally, phosphorylation on serine residues in the C-terminal is stimulated by binding CC chemokines especially by APO-RANTES.

Its subcellular location is the cell membrane. Functionally, receptor for a number of inflammatory CC-chemokines including CCL3/MIP-1-alpha, CCL4/MIP-1-beta and RANTES and subsequently transduces a signal by increasing the intracellular calcium ion level. May play a role in the control of granulocytic lineage proliferation or differentiation. Participates in T-lymphocyte migration to the infection site by acting as a chemotactic receptor. This is C-C chemokine receptor type 5 (Ccr5) from Mus musculus (Mouse).